The sequence spans 398 residues: Serpin-Z1A (398 aa).

An RCL region spans residues 343 to 367 (GTEAAASTAIKMVLQQARPPSVMDF).

Belongs to the serpin family.

Its function is as follows. Inhibits chymotrypsin and cathepsin G in vitro. The polypeptide is Serpin-Z1A (WZCI) (Triticum aestivum (Wheat)).